A 165-amino-acid polypeptide reads, in one-letter code: Large ribosomal subunit protein eL15 (165 aa).

A disordered region spans residues 126-147; it reads TSAGRKSRGLGKGHKFHHTIGG. Positions 130–143 are enriched in basic residues; the sequence is RKSRGLGKGHKFHH.

Belongs to the eukaryotic ribosomal protein eL15 family. In terms of assembly, component of the large ribosomal subunit.

The protein resides in the cytoplasm. In terms of biological role, component of the large ribosomal subunit. The ribosome is a large ribonucleoprotein complex responsible for the synthesis of proteins in the cell. In Gallus gallus (Chicken), this protein is Large ribosomal subunit protein eL15 (RPL15).